A 555-amino-acid chain; its full sequence is Membrane protein insertase YidC (555 aa).

The chain crosses the membrane as a helical span at residues 7–24 (ILWVIFSMSLVLLYDNWQ). Composition is skewed to low complexity over residues 40-54 (QQAA…TPQA) and 64-81 (AAPG…QPVG). The segment at 40 to 81 (QQAAPAGAGGATPQADVPKANATNAAPGTVPAAPQAAAQPVG) is disordered. Transmembrane regions (helical) follow at residues 334-354 (LELV…FWLL), 360-380 (FLGN…LVFF), 430-450 (LGGC…YWVL), 468-488 (LSVP…MFVQ), and 503-523 (VMMI…AGLV).

The protein belongs to the OXA1/ALB3/YidC family. Type 1 subfamily. Interacts with the Sec translocase complex via SecD. Specifically interacts with transmembrane segments of nascent integral membrane proteins during membrane integration.

It localises to the cell inner membrane. Functionally, required for the insertion and/or proper folding and/or complex formation of integral membrane proteins into the membrane. Involved in integration of membrane proteins that insert both dependently and independently of the Sec translocase complex, as well as at least some lipoproteins. Aids folding of multispanning membrane proteins. This chain is Membrane protein insertase YidC, found in Cupriavidus metallidurans (strain ATCC 43123 / DSM 2839 / NBRC 102507 / CH34) (Ralstonia metallidurans).